The following is a 464-amino-acid chain: GTPase Der (464 aa).

2 EngA-type G domains span residues alanine 3–glutamate 166 and leucine 177–asparagine 350. GTP-binding positions include glycine 9 to serine 16, aspartate 56 to valine 60, asparagine 118 to glutamate 121, glycine 183 to serine 190, aspartate 230 to isoleucine 234, and asparagine 295 to aspartate 298. The 85-residue stretch at serine 351–lysine 435 folds into the KH-like domain.

This sequence belongs to the TRAFAC class TrmE-Era-EngA-EngB-Septin-like GTPase superfamily. EngA (Der) GTPase family. As to quaternary structure, associates with the 50S ribosomal subunit.

Its function is as follows. GTPase that plays an essential role in the late steps of ribosome biogenesis. The polypeptide is GTPase Der (Nitrosococcus oceani (strain ATCC 19707 / BCRC 17464 / JCM 30415 / NCIMB 11848 / C-107)).